Reading from the N-terminus, the 707-residue chain is MWLFALLVTLFYGVEGSIYLPQKLYGEVTSPLYPKPYPSDLETTTVITVPMGYRVKLVFWQFDVEPSEGCFYDYVKISADKQTLGRFCGQLDSPLGNPPGSKEFMSQGNKMLLTFHTDFSNEENGTIMFYKGFLAYYQAVDLDECASQPNSVEEGLQPRCQHLCHNYVGGYFCSCHPGYELQKDGQSCQAECSSELYTEPSGYVSSLEYPQPYPPDLRCNYSIRVERGLTVHLKFLDPFEIDDHQQVHCPYDQLQIYANGKNLGEFCGKQRPPDLDTSSNAVDLLFFTDESGDSRGWKLHYTTETIKCPQPKALDEFTIIQDPQPQYQFRDYFIVTCKQGYQLMEGNQALLSFTAVCQNDGTWHRAMPRCKIKNCGQPQSLSNGDFRYITTKGVTTYEASIQYHCHEPYYKMLTRAGSSESMRGIYTCTAQGIWKNEEEGEKMPRCLPVCGKPVNPVTQKERIIRGQPARPGNFPWQAFTTTHGRGGGALLGDRWILTAAHTIYPKHHNKENDNANPKMLVFLGHTNVEQIKKLGHHPVRRVIIHPDYRQDEPNNFEGDIALLELENSVTLGPELLPICLPDNETFYGQGLMGYVSGFGITEDKLAFDLRFVRLPVADSEACQRWLQTKKDTSPFSQNMFCSGDPAVQQDACQGDSGGVFAVRDRNRDIWVATGIVSWGIGCGEGYGFYTKVLNYVDWIKKEMGDEN.

Positions 1–16 (MWLFALLVTLFYGVEG) are cleaved as a signal peptide. The CUB 1 domain occupies 17-140 (SIYLPQKLYG…KGFLAYYQAV (124 aa)). Residues glutamate 65, aspartate 73, and aspartate 118 each contribute to the Ca(2+) site. Cysteine 70 and cysteine 88 are disulfide-bonded. N-linked (GlcNAc...) asparagine glycosylation is present at asparagine 124. Aspartate 141, leucine 142, and glutamate 144 together coordinate Ca(2+). Residues 141-189 (DLDECASQPNSVEEGLQPRCQHLCHNYVGGYFCSCHPGYELQKDGQSCQ) form the EGF-like; calcium-binding domain. 4 cysteine pairs are disulfide-bonded: cysteine 145-cysteine 164, cysteine 160-cysteine 173, cysteine 175-cysteine 188, and cysteine 192-cysteine 219. Residues asparagine 166, tyrosine 167, and glycine 170 each contribute to the Ca(2+) site. Asparagine 166 is subject to (3R)-3-hydroxyasparagine. The region spanning 192-304 (CSSELYTEPS…RGWKLHYTTE (113 aa)) is the CUB 2 domain. Serine 205 is subject to Phosphoserine; by CK2. Asparagine 220 carries N-linked (GlcNAc...) asparagine glycosylation. Aspartate 242, aspartate 252, aspartate 289, and aspartate 293 together coordinate Ca(2+). Cysteine 249 and cysteine 267 form a disulfide bridge. 2 consecutive Sushi domains span residues 306–372 (IKCP…RCKI) and 373–448 (KNCG…RCLP). 5 disulfides stabilise this stretch: cysteine 308–cysteine 357, cysteine 337–cysteine 370, cysteine 375–cysteine 428, cysteine 405–cysteine 446, and cysteine 450–cysteine 579. A Peptidase S1 domain is found at 463–704 (IIRGQPARPG…YVDWIKKEMG (242 aa)). Residues histidine 501 and aspartate 559 each act as charge relay system in the active site. Residue asparagine 583 is glycosylated (N-linked (GlcNAc...) asparagine). Cystine bridges form between cysteine 622/cysteine 641 and cysteine 652/cysteine 682. Catalysis depends on serine 656, which acts as the Charge relay system.

Belongs to the peptidase S1 family. Core component of the complement C1 complex, a calcium-dependent complex composed of 1 molecule of the C1Q subcomplex, 2 molecules of C1R and 2 molecules of C1S. The C1Q subcomplex is composed 18 subunits: 3 chains of C1QA, C1QB, and C1QC trimerize to form 6 collagen-like triple helices connected to six globular ligand-recognition modules. Within the C1 complex, C1R is a dimer of identical chains, each of which is activated by cleavage into two chains, heavy and light, connected by disulfide bonds. Cleaved and activated by autocatalytic processing to generate Complement C1r subcomponent heavy and light chains that are connected by disulfide bonds. In terms of processing, the iron and 2-oxoglutarate dependent 3-hydroxylation of aspartate and asparagine is (R) stereospecific within EGF domains.

It is found in the secreted. It localises to the cell surface. It catalyses the reaction Selective cleavage of Lys(or Arg)-|-Ile bond in complement subcomponent C1s to form the active form of C1s (EC 3.4.21.42).. With respect to regulation, activated by the C1Q subcomplex of the C1 complex following C1Q binding to immunoglobulins (IgG or IgM) complexed with antigens to form antigen-antibody complexes on the surface of pathogens. Immunoglobulin-binding promotes autoactivation of C1R, which results in the cleavage of the Arg-Ile bond in the catalytic domain. Its function is as follows. Serine protease component of the complement C1 complex, a multiprotein complex that initiates the classical pathway of the complement system, a cascade of proteins that leads to phagocytosis and breakdown of pathogens and signaling that strengthens the adaptive immune system. C1R catalyzes the first enzymatic step in the classical complement pathway: it is activated by the C1Q subcomplex of the C1 complex, which associates with IgG or IgM immunoglobulins complexed with antigens to form antigen-antibody complexes on the surface of pathogens. Immunoglobulin-binding promotes the autocatalytic cleavage and activation of C1R. Activated C1R then cleaves and activates C1S, the second protease of the classical complement pathway. It is unclear if C1R activates C1S within single, strained C1 complexes or between neighboring C1 complexes on surfaces. The polypeptide is Complement C1r-A subcomponent (C1ra) (Mus musculus (Mouse)).